Consider the following 228-residue polypeptide: Phosphoribosylformylglycinamidine synthase subunit PurQ (228 aa).

One can recognise a Glutamine amidotransferase type-1 domain in the interval 4–226; that stretch reads AVVVFPGSNC…VNYWRETHVV (223 aa). The active-site Nucleophile is the cysteine 86. Active-site residues include histidine 195 and glutamate 197.

As to quaternary structure, part of the FGAM synthase complex composed of 1 PurL, 1 PurQ and 2 PurS subunits.

The protein resides in the cytoplasm. It catalyses the reaction N(2)-formyl-N(1)-(5-phospho-beta-D-ribosyl)glycinamide + L-glutamine + ATP + H2O = 2-formamido-N(1)-(5-O-phospho-beta-D-ribosyl)acetamidine + L-glutamate + ADP + phosphate + H(+). The catalysed reaction is L-glutamine + H2O = L-glutamate + NH4(+). It participates in purine metabolism; IMP biosynthesis via de novo pathway; 5-amino-1-(5-phospho-D-ribosyl)imidazole from N(2)-formyl-N(1)-(5-phospho-D-ribosyl)glycinamide: step 1/2. Part of the phosphoribosylformylglycinamidine synthase complex involved in the purines biosynthetic pathway. Catalyzes the ATP-dependent conversion of formylglycinamide ribonucleotide (FGAR) and glutamine to yield formylglycinamidine ribonucleotide (FGAM) and glutamate. The FGAM synthase complex is composed of three subunits. PurQ produces an ammonia molecule by converting glutamine to glutamate. PurL transfers the ammonia molecule to FGAR to form FGAM in an ATP-dependent manner. PurS interacts with PurQ and PurL and is thought to assist in the transfer of the ammonia molecule from PurQ to PurL. This is Phosphoribosylformylglycinamidine synthase subunit PurQ from Geobacillus kaustophilus (strain HTA426).